The following is a 492-amino-acid chain: Catalase isozyme 2 (492 aa).

Active-site residues include histidine 65 and asparagine 138. Tyrosine 348 is a binding site for heme.

It belongs to the catalase family. As to quaternary structure, homotetramer. It depends on heme as a cofactor.

It is found in the peroxisome. It carries out the reaction 2 H2O2 = O2 + 2 H2O. In terms of biological role, occurs in almost all aerobically respiring organisms and serves to protect cells from the toxic effects of hydrogen peroxide. The sequence is that of Catalase isozyme 2 (CAT2) from Solanum lycopersicum (Tomato).